The following is a 284-amino-acid chain: Citrate lyase subunit beta-like protein (284 aa).

Substrate is bound by residues arginine 74 and glutamate 129. Residues glutamate 129 and aspartate 155 each contribute to the Mg(2+) site.

The protein belongs to the HpcH/HpaI aldolase family. Citrate lyase beta subunit-like subfamily. As to quaternary structure, homotrimer. The cofactor is Mg(2+).

May play a role in fatty acid biosynthesis. This Deinococcus radiodurans (strain ATCC 13939 / DSM 20539 / JCM 16871 / CCUG 27074 / LMG 4051 / NBRC 15346 / NCIMB 9279 / VKM B-1422 / R1) protein is Citrate lyase subunit beta-like protein.